The primary structure comprises 586 residues: Old nuclease (586 aa).

Residues 1–163 (MTVRLASVSI…VEDSTKCKNT (163 aa)) are ATPase domain N-terminus. 34 to 38 (NAGKS) serves as a coordination point for ATP. A dimerization domain region spans residues 164–270 (TTIGKILSAI…SRFGHGTQRS (107 aa)). The ATPase domain C-terminus stretch occupies residues 271 to 390 (IQMALIQYLA…TLSNSSYLLF (120 aa)). Positions 393–586 (EVLLVEGKTE…DEMEDFIKWI (194 aa)) are toprim domain. Glutamate 398, glutamate 402, aspartate 453, aspartate 455, aspartate 541, and glutamate 543 together coordinate a divalent metal cation. Arginine 570 serves as the catalytic Stabilizes transition state or protonates leaving group.

This sequence belongs to the class 1 OLD nuclease family. Mg(2+) is required as a cofactor.

It carries out the reaction Exonucleolytic cleavage in the 5'- to 3'-direction to yield nucleoside 5'-phosphates.. Functionally, an exonuclease that acts preferentially on linear dsDNA, processively degrading it from 5'-3', releasing 5'-phosphomononucleotides. Initiates on 5'-phosphate and 5'-hydroxyl ends. Also acts on linear ssDNA, nicked DNA and RNA. ATP enhances but is not necessary for exonuclease activity; has ATPase activity that is not stimulated by DNA. The old protein kills E.coli recB and recC mutants and interferes with phage lambda growth. Both the exonuclease and ATPase activities are required in vivo. Probably interferes with lambda phage by degrading its linear DNA. Isolated as a mutant able to lysogenize E.coli strain C cells normally not susceptible to lysis by phage P2. In Enterobacteriaceae (Bacteriophage P2), this protein is Old nuclease.